The primary structure comprises 95 residues: UPF0213 protein YPA_2977 (95 aa).

Positions 4 to 79 (SLWHLYLLRT…KQLSKQQKEK (76 aa)) constitute a GIY-YIG domain.

The protein belongs to the UPF0213 family.

This chain is UPF0213 protein YPA_2977, found in Yersinia pestis bv. Antiqua (strain Antiqua).